Reading from the N-terminus, the 254-residue chain is Probable electron transfer flavoprotein subunit beta (254 aa).

It belongs to the ETF beta-subunit/FixA family. As to quaternary structure, heterodimer of an alpha and a beta subunit. It depends on FAD as a cofactor. Requires AMP as cofactor.

The protein resides in the mitochondrion matrix. Functionally, the electron transfer flavoprotein serves as a specific electron acceptor for several dehydrogenases, including five acyl-CoA dehydrogenases, glutaryl-CoA and sarcosine dehydrogenase. It transfers the electrons to the main mitochondrial respiratory chain via ETF-ubiquinone oxidoreductase (ETF dehydrogenase). The protein is Probable electron transfer flavoprotein subunit beta of Schizosaccharomyces pombe (strain 972 / ATCC 24843) (Fission yeast).